A 247-amino-acid polypeptide reads, in one-letter code: 5'-nucleotidase SurE (247 aa).

A divalent metal cation is bound by residues Asp8, Asp9, Ser39, and Asn91.

It belongs to the SurE nucleotidase family. A divalent metal cation is required as a cofactor.

It localises to the cytoplasm. The catalysed reaction is a ribonucleoside 5'-phosphate + H2O = a ribonucleoside + phosphate. Nucleotidase that shows phosphatase activity on nucleoside 5'-monophosphates. This is 5'-nucleotidase SurE from Nitrosomonas europaea (strain ATCC 19718 / CIP 103999 / KCTC 2705 / NBRC 14298).